Here is a 640-residue protein sequence, read N- to C-terminus: Threonine--tRNA ligase (640 aa).

The TGS domain maps to 1 to 61 (MPIITLPDGN…EKDSEVNIIT (61 aa)). The interval 242-533 (DHRRIAKQMS…LIEHYAGRMP (292 aa)) is catalytic. 3 residues coordinate Zn(2+): cysteine 333, histidine 384, and histidine 510.

This sequence belongs to the class-II aminoacyl-tRNA synthetase family. Homodimer. Zn(2+) serves as cofactor.

It localises to the cytoplasm. The catalysed reaction is tRNA(Thr) + L-threonine + ATP = L-threonyl-tRNA(Thr) + AMP + diphosphate + H(+). In terms of biological role, catalyzes the attachment of threonine to tRNA(Thr) in a two-step reaction: L-threonine is first activated by ATP to form Thr-AMP and then transferred to the acceptor end of tRNA(Thr). Also edits incorrectly charged L-seryl-tRNA(Thr). The protein is Threonine--tRNA ligase of Prochlorococcus marinus (strain MIT 9303).